Consider the following 479-residue polypeptide: Fibrinogen beta chain (479 aa).

Positions 1–18 (MRHLWLLLLSVSLVQTQA) are cleaved as a signal peptide. Residues 20-82 (TTDSDKVDLS…VERKPPDAGG (63 aa)) form a disordered region. Residues 33–35 (GHR) form a beta-chain polymerization, binding distal domain of another fibrin region. Basic and acidic residues-rich tracts occupy residues 35–45 (RPVDRRKEEPP) and 64–78 (AKVD…RKPP). 2 disulfides stabilise this stretch: Cys-219–Cys-304 and Cys-229–Cys-258. A Fibrinogen C-terminal domain is found at 220–476 (NIPVVSGKEC…RMSMKIRPVF (257 aa)). Asn-382 carries N-linked (GlcNAc...) asparagine glycosylation. A disulfide bridge connects residues Cys-412 and Cys-425.

Heterohexamer; disulfide linked. Contains 2 sets of 3 non-identical chains (alpha, beta and gamma). The 2 heterotrimers are in head to head conformation with the N-termini in a small central domain. Post-translationally, conversion of fibrinogen to fibrin is triggered by thrombin, which cleaves fibrinopeptides A and B from alpha and beta chains, and thus exposes the N-terminal polymerization sites responsible for the formation of the soft clot.

Its subcellular location is the secreted. In terms of biological role, cleaved by the protease thrombin to yield monomers which, together with fibrinogen alpha (FGA) and fibrinogen gamma (FGG), polymerize to form an insoluble fibrin matrix. Fibrin has a major function in hemostasis as one of the primary components of blood clots. In addition, functions during the early stages of wound repair to stabilize the lesion and guide cell migration during re-epithelialization. Was originally thought to be essential for platelet aggregation, based on in vitro studies using anticoagulated blood. However subsequent studies have shown that it is not absolutely required for thrombus formation in vivo. Enhances expression of SELP in activated platelets. Maternal fibrinogen is essential for successful pregnancy. Fibrin deposition is also associated with infection, where it protects against IFNG-mediated hemorrhage. May also facilitate the antibacterial immune response via both innate and T-cell mediated pathways. This Rattus norvegicus (Rat) protein is Fibrinogen beta chain (Fgb).